Here is a 587-residue protein sequence, read N- to C-terminus: Lipoprotein LpqB (587 aa).

A signal peptide spans 1-19 (MERLMRLTILLFLGAVLAG). C20 carries the N-palmitoyl cysteine lipid modification. Residue C20 is the site of S-diacylglycerol cysteine attachment.

The protein belongs to the LpqB lipoprotein family.

The protein localises to the cell membrane. This chain is Lipoprotein LpqB, found in Mycobacterium bovis (strain ATCC BAA-935 / AF2122/97).